The primary structure comprises 418 residues: Queuine tRNA-ribosyltransferase accessory subunit 2 (418 aa).

Residues cysteine 325, cysteine 327, cysteine 330, and histidine 356 each coordinate Zn(2+).

It belongs to the queuine tRNA-ribosyltransferase family. QTRT2 subfamily. As to quaternary structure, heterodimer of a catalytic subunit and an accessory subunit. Requires Zn(2+) as cofactor.

It is found in the cytoplasm. Its function is as follows. Non-catalytic subunit of the queuine tRNA-ribosyltransferase (TGT) that catalyzes the base-exchange of a guanine (G) residue with queuine (Q) at position 34 (anticodon wobble position) in tRNAs with GU(N) anticodons (tRNA-Asp, -Asn, -His and -Tyr), resulting in the hypermodified nucleoside queuosine (7-(((4,5-cis-dihydroxy-2-cyclopenten-1-yl)amino)methyl)-7-deazaguanosine). This chain is Queuine tRNA-ribosyltransferase accessory subunit 2, found in Drosophila melanogaster (Fruit fly).